We begin with the raw amino-acid sequence, 341 residues long: Phosphoribosylformylglycinamidine cyclo-ligase (341 aa).

The protein belongs to the AIR synthase family.

The protein resides in the cytoplasm. It catalyses the reaction 2-formamido-N(1)-(5-O-phospho-beta-D-ribosyl)acetamidine + ATP = 5-amino-1-(5-phospho-beta-D-ribosyl)imidazole + ADP + phosphate + H(+). Its pathway is purine metabolism; IMP biosynthesis via de novo pathway; 5-amino-1-(5-phospho-D-ribosyl)imidazole from N(2)-formyl-N(1)-(5-phospho-D-ribosyl)glycinamide: step 2/2. The sequence is that of Phosphoribosylformylglycinamidine cyclo-ligase from Xanthomonas campestris pv. campestris (strain 8004).